The chain runs to 172 residues: Adenylate kinase isoenzyme 6 (172 aa).

Residues Gly-13, Gly-15, Lys-16, Thr-17, and Thr-18 each contribute to the ATP site. Residues 33 to 56 form an NMPbind region; it reads NVGDLAREGHLYDGYDEEYGCPIL. The tract at residues 108–118 is LID; the sequence is TRGYHEKKLQD. Residue Arg-109 coordinates ATP.

This sequence belongs to the adenylate kinase family. AK6 subfamily. As to quaternary structure, monomer and homodimer. Interacts with small ribosomal subunit protein uS11. Not a structural component of 43S pre-ribosomes, but transiently interacts with them by binding to uS11. Interacts with COIL (via C-terminus).

The protein localises to the cytoplasm. Its subcellular location is the nucleus. It is found in the nucleoplasm. It localises to the cajal body. The catalysed reaction is AMP + ATP = 2 ADP. The enzyme catalyses ATP + H2O = ADP + phosphate + H(+). Its function is as follows. Broad-specificity nucleoside monophosphate (NMP) kinase that catalyzes the reversible transfer of the terminal phosphate group between nucleoside triphosphates and monophosphates. Also has ATPase activity. Involved in the late cytoplasmic maturation steps of the 40S ribosomal particles, specifically 18S rRNA maturation. While NMP activity is not required for ribosome maturation, ATPase activity is. Associates transiently with small ribosomal subunit protein uS11. ATP hydrolysis breaks the interaction with uS11. May temporarily remove uS11 from the ribosome to enable a conformational change of the ribosomal RNA that is needed for the final maturation step of the small ribosomal subunit. Its NMP activity may have a role in nuclear energy homeostasis. May be involved in regulation of Cajal body (CB) formation. The chain is Adenylate kinase isoenzyme 6 from Rattus norvegicus (Rat).